Consider the following 372-residue polypeptide: THAP domain-containing protein 5 (372 aa).

The segment at 1–85 (MTRYCAATRC…LKPNAIPTLF (85 aa)) adopts a THAP-type zinc-finger fold. Residues 306 to 362 (TDRHYLRQKIAKLQSKIAVLEAQENATLSRLRLLESVIAKLKQENLLSDEKLKILEN) are a coiled coil.

Its subcellular location is the nucleus. The protein is THAP domain-containing protein 5 (thap5) of Xenopus laevis (African clawed frog).